The chain runs to 34 residues: Mu-conotoxin GS (34 aa).

Intrachain disulfides connect cysteine 2–cysteine 14, cysteine 9–cysteine 19, and cysteine 13–cysteine 27. 4-hydroxyproline is present on residues proline 10 and proline 11. The residue at position 32 (glutamate 32) is a 4-carboxyglutamate.

In terms of tissue distribution, expressed by the venom duct.

The protein resides in the secreted. Functionally, mu-conotoxins block voltage-gated sodium channels (Nav). No effect was observed upon injections into mice and goldfish (25 ug). The protein is Mu-conotoxin GS of Conus geographus (Geography cone).